We begin with the raw amino-acid sequence, 317 residues long: 4-hydroxy-3-methylbut-2-enyl diphosphate reductase (317 aa).

Cys-12 is a [4Fe-4S] cluster binding site. Residues His-41 and His-74 each contribute to the (2E)-4-hydroxy-3-methylbut-2-enyl diphosphate site. The dimethylallyl diphosphate site is built by His-41 and His-74. 2 residues coordinate isopentenyl diphosphate: His-41 and His-74. Residue Cys-97 participates in [4Fe-4S] cluster binding. Residue His-125 participates in (2E)-4-hydroxy-3-methylbut-2-enyl diphosphate binding. His-125 contributes to the dimethylallyl diphosphate binding site. Position 125 (His-125) interacts with isopentenyl diphosphate. Catalysis depends on Glu-127, which acts as the Proton donor. Residue Thr-168 coordinates (2E)-4-hydroxy-3-methylbut-2-enyl diphosphate. Cys-198 is a binding site for [4Fe-4S] cluster. Residues Ser-226, Ser-227, Asn-228, and Ser-270 each contribute to the (2E)-4-hydroxy-3-methylbut-2-enyl diphosphate site. The dimethylallyl diphosphate site is built by Ser-226, Ser-227, Asn-228, and Ser-270. Isopentenyl diphosphate is bound by residues Ser-226, Ser-227, Asn-228, and Ser-270.

Belongs to the IspH family. In terms of assembly, homodimer. It depends on [4Fe-4S] cluster as a cofactor.

The enzyme catalyses isopentenyl diphosphate + 2 oxidized [2Fe-2S]-[ferredoxin] + H2O = (2E)-4-hydroxy-3-methylbut-2-enyl diphosphate + 2 reduced [2Fe-2S]-[ferredoxin] + 2 H(+). It catalyses the reaction dimethylallyl diphosphate + 2 oxidized [2Fe-2S]-[ferredoxin] + H2O = (2E)-4-hydroxy-3-methylbut-2-enyl diphosphate + 2 reduced [2Fe-2S]-[ferredoxin] + 2 H(+). Its pathway is isoprenoid biosynthesis; dimethylallyl diphosphate biosynthesis; dimethylallyl diphosphate from (2E)-4-hydroxy-3-methylbutenyl diphosphate: step 1/1. It participates in isoprenoid biosynthesis; isopentenyl diphosphate biosynthesis via DXP pathway; isopentenyl diphosphate from 1-deoxy-D-xylulose 5-phosphate: step 6/6. Its function is as follows. Catalyzes the conversion of 1-hydroxy-2-methyl-2-(E)-butenyl 4-diphosphate (HMBPP) into a mixture of isopentenyl diphosphate (IPP) and dimethylallyl diphosphate (DMAPP). Acts in the terminal step of the DOXP/MEP pathway for isoprenoid precursor biosynthesis. The sequence is that of 4-hydroxy-3-methylbut-2-enyl diphosphate reductase from Yersinia pestis bv. Antiqua (strain Antiqua).